We begin with the raw amino-acid sequence, 415 residues long: ER-derived vesicles protein ERV46 (415 aa).

Topologically, residues 1–24 are cytoplasmic; sequence MKRSTLLSLDAFAKTEEDVRVRTR. A helical membrane pass occupies residues 25–45; that stretch reads AGGLITLSCILTTLFLLVNEW. Residues 46 to 376 are Lumenal-facing; that stretch reads GQFNSVVTRP…VINKEQHGQT (331 aa). Residues 377-397 form a helical membrane-spanning segment; it reads WSGFILNCITSIGGVLAVGTV. Residues 398 to 415 are Cytoplasmic-facing; the sequence is MDKLFYKAQRSIWGKKSQ. Residues 402–403 carry the Phenylalanine-tyrosine motif motif; it reads FY.

The protein belongs to the ERGIC family. In terms of assembly, interacts with ERV41.

It localises to the endoplasmic reticulum membrane. Its subcellular location is the golgi apparatus membrane. In terms of biological role, constituent of COPII-coated endoplasmic reticulum-derived transport vesicles. Required for efficient transport of a subset of secretory proteins to the Golgi. The C-terminal Phe-Tyr motif is required for exit from the endoplasmic reticulum. Facilitates retrograde transport from the Golgi to the endoplasmic reticulum. The protein is ER-derived vesicles protein ERV46 (ERV46) of Saccharomyces cerevisiae (strain ATCC 204508 / S288c) (Baker's yeast).